The sequence spans 480 residues: Gasdermin-C3 (480 aa).

Residues 1–226 (MGYSFDRASK…TCVILPSATK (226 aa)) are triggers pyroptosis.

This sequence belongs to the gasdermin family. In terms of assembly, homooligomer; homooligomeric ring-shaped pore complex containing 27-28 subunits when inserted in the membrane. Cleavage by CASP8 relieves autoinhibition by releasing the N-terminal moiety (Gasdermin-C3, N-terminal) that initiates pyroptosis. In terms of processing, palmitoylated.

The protein localises to the cytoplasm. It localises to the cytosol. Its subcellular location is the cell membrane. Its activity is regulated as follows. The full-length protein before cleavage is inactive: intramolecular interactions between N- and C-terminal domains mediate autoinhibition in the absence of activation signal. The intrinsic pyroptosis-inducing activity is carried by the released N-terminal moiety (Gasdermin-C3, N-terminal) following cleavage by caspase CASP8. This form constitutes the precursor of the pore-forming protein: upon cleavage, the released N-terminal moiety (Gasdermin-C3, N-terminal) binds to membranes and forms pores, triggering pyroptosis. Functionally, pore-forming protein that causes membrane permeabilization and pyroptosis. Produced by the cleavage of gasdermin-C3 by caspase CASP8 in response to death signals. After cleavage, moves to the plasma membrane where it strongly binds to membrane inner leaflet lipids. Homooligomerizes within the membrane and forms pores of 10-15 nanometers (nm) of inner diameter, triggering pyroptosis. The polypeptide is Gasdermin-C3 (Mus musculus (Mouse)).